A 307-amino-acid polypeptide reads, in one-letter code: Malate dehydrogenase (307 aa).

Residues 8–13 (GAGNVG) and Asp-32 contribute to the NAD(+) site. Substrate contacts are provided by Arg-81 and Arg-87. Residues Asn-94 and 117 to 119 (VSN) each bind NAD(+). Residues Asn-119 and Arg-150 each contribute to the substrate site. His-174 serves as the catalytic Proton acceptor.

It belongs to the LDH/MDH superfamily. MDH type 3 family.

It carries out the reaction (S)-malate + NAD(+) = oxaloacetate + NADH + H(+). In terms of biological role, catalyzes the reversible oxidation of malate to oxaloacetate. The chain is Malate dehydrogenase from Dehalococcoides mccartyi (strain CBDB1).